The primary structure comprises 470 residues: Retinoic acid receptor RXR-gamma (470 aa).

The tract at residues 1-145 (MHLATETAPS…NSPGALTKHI (145 aa)) is modulating. 2 NR C4-type zinc fingers span residues 146-166 (CAIC…CEGC) and 182-206 (CRDS…YQKC). The nuclear receptor DNA-binding region spans 146 to 211 (CAICGDRSSG…RYQKCLAMGM (66 aa)). The interval 212–235 (KREAVQEERQRSREKSDTEAESTS) is hinge. Residues 217-229 (QEERQRSREKSDT) are compositionally biased toward basic and acidic residues. The segment at 217–242 (QEERQRSREKSDTEAESTSSTSEEMP) is disordered. Residues 238–466 (SEEMPVERIL…TFLMEMLETP (229 aa)) enclose the NR LBD domain.

This sequence belongs to the nuclear hormone receptor family. NR2 subfamily. In terms of assembly, homodimer. Heterodimer; with a rar molecule. Binds DNA preferentially as a rar/rxr heterodimer.

It is found in the nucleus. In terms of biological role, receptor for retinoic acid. Retinoic acid receptors bind as heterodimers to their target response elements in response to their ligands, all-trans or 9-cis retinoic acid, and regulate gene expression in various biological processes. The rar/rxr heterodimers bind to the retinoic acid response elements (RARE) composed of tandem 5'-AGGTCA-3' sites known as DR1-DR5. The high affinity ligand for rxrs is 9-cis retinoic acid. This chain is Retinoic acid receptor RXR-gamma (rxrg), found in Xenopus laevis (African clawed frog).